Consider the following 892-residue polypeptide: Ataxin-7 (892 aa).

A compositionally biased stretch (basic and acidic residues) spans 1–15; that stretch reads MSERAADDVRGEPRR. Disordered regions lie at residues 1–74 and 195–247; these read MSER…SAAA and SKGG…SRVP. The segment covering 16 to 38 has biased composition (low complexity); that stretch reads AAAAAGGAAAAAARQQQQQQQQQ. Positions 39 to 55 are enriched in pro residues; the sequence is QPPPPQPQRQQHPPPPP. Residues 195 to 222 show a composition bias toward low complexity; that stretch reads SKGGSASGSNRSSSGGVLSASSSSSKLL. K257 participates in a covalent cross-link: Glycyl lysine isopeptide (Lys-Gly) (interchain with G-Cter in SUMO); alternate. K257 is covalently cross-linked (Glycyl lysine isopeptide (Lys-Gly) (interchain with G-Cter in SUMO2); alternate). 4 disordered regions span residues 298 to 328, 389 to 505, 616 to 730, and 818 to 892; these read PTLP…NSNN, HKNK…ESVE, KSVP…SSHS, and SHGS…KARP. Basic and acidic residues-rich tracts occupy residues 318-327 and 389-403; these read LEKKPEDNSN and HKNK…RHPD. Positions 334 to 401 constitute an SCA7 domain; it reads KRLSEREFDP…KTREKELIRH (68 aa). 3 stretches are compositionally biased toward pro residues: residues 405–419, 448–458, and 468–483; these read QQPP…PAPP, HTPSLPRPPGC, and IDPP…PLPA. The segment covering 493–502 has biased composition (acidic residues); that stretch reads EEGEGDDKEE. Over residues 616–629 the composition is skewed to polar residues; sequence KSVPAHGTTLNAQP. A compositionally biased stretch (low complexity) spans 640–669; sequence SMQSRQVSSSSSSPSTPSGLSSVPSSPMSR. Basic residues predominate over residues 670 to 680; sequence KPQKLKSSKSL. Residues 685 to 695 show a composition bias toward polar residues; sequence SSGNSTNCQNA. Low complexity-rich tracts occupy residues 716 to 730 and 840 to 851; these read HSSS…SSHS and SPSSSSINNSSS.

The protein belongs to the ataxin-7 family. Component of the SAGA transcription coactivator-HAT complex, at least composed of SUPT3H, GCN5L2, TAF5L, TAF6L, SUPT7L, TADA3L, TAD1L, TAF10, TAF12, TRRAP, TAF9 and ATXN7. The STAGA core complex is associated with a subcomplex required for histone deubiquitination composed of ATXN7L3, ENY2 and USP22. Interacts with SORBS1, PSMC1 and CRX. Interacts with TRRAP, GCN5L2 and TAF10. Interacts with alpha tubulin. Proteolytically cleaved by caspase-7 (CASP7). The cleavage may be involved in SCA7 degeneration: the isoform fragments may exert distinct toxic influences that could contribute to selective neurodegeneration. Post-translationally, sumoylation decreases the aggregation propensity and cellular toxicity of forms with an expanded poly-Gln region but has no effect on subcellular location or interaction with components of the STAGA complex. Isoform a is expressed in CNS, but is expressed predominantly in the peripherical tissues. In terms of tissue distribution, isoform b is expressed in CNS. Also highly expressed in the frontal lobe, skeletal muscle and spinal cord and is expressed at a lower level in the lung, lymphoblast and intestine.

It is found in the nucleus. The protein resides in the nucleolus. Its subcellular location is the nucleus matrix. The protein localises to the cytoplasm. It localises to the cytoskeleton. Its function is as follows. Acts as a component of the SAGA (aka STAGA) transcription coactivator-HAT complex. Mediates the interaction of SAGA complex with the CRX and is involved in CRX-dependent gene activation. Probably involved in tethering the deubiquitination module within the SAGA complex. Necessary for microtubule cytoskeleton stabilization. Involved in neurodegeneration. This chain is Ataxin-7 (ATXN7), found in Homo sapiens (Human).